The chain runs to 381 residues: Queuine tRNA-ribosyltransferase (381 aa).

The Proton acceptor role is filled by Asp-92. Substrate-binding positions include Asp-92 to Phe-96, Asp-146, Gln-190, and Gly-217. An RNA binding region spans residues Gly-248–Asp-254. Asp-267 acts as the Nucleophile in catalysis. Residues Thr-272–Arg-276 form an RNA binding; important for wobble base 34 recognition region. Zn(2+) is bound by residues Cys-305, Cys-307, Cys-310, and His-337.

This sequence belongs to the queuine tRNA-ribosyltransferase family. Homodimer. Within each dimer, one monomer is responsible for RNA recognition and catalysis, while the other monomer binds to the replacement base PreQ1. Zn(2+) is required as a cofactor.

The catalysed reaction is 7-aminomethyl-7-carbaguanine + guanosine(34) in tRNA = 7-aminomethyl-7-carbaguanosine(34) in tRNA + guanine. It functions in the pathway tRNA modification; tRNA-queuosine biosynthesis. Catalyzes the base-exchange of a guanine (G) residue with the queuine precursor 7-aminomethyl-7-deazaguanine (PreQ1) at position 34 (anticodon wobble position) in tRNAs with GU(N) anticodons (tRNA-Asp, -Asn, -His and -Tyr). Catalysis occurs through a double-displacement mechanism. The nucleophile active site attacks the C1' of nucleotide 34 to detach the guanine base from the RNA, forming a covalent enzyme-RNA intermediate. The proton acceptor active site deprotonates the incoming PreQ1, allowing a nucleophilic attack on the C1' of the ribose to form the product. After dissociation, two additional enzymatic reactions on the tRNA convert PreQ1 to queuine (Q), resulting in the hypermodified nucleoside queuosine (7-(((4,5-cis-dihydroxy-2-cyclopenten-1-yl)amino)methyl)-7-deazaguanosine). The sequence is that of Queuine tRNA-ribosyltransferase from Xanthomonas campestris pv. campestris (strain 8004).